We begin with the raw amino-acid sequence, 115 residues long: Large ribosomal subunit protein bL35m (115 aa).

It belongs to the bacterial ribosomal protein bL35 family.

The protein localises to the mitochondrion. This chain is Large ribosomal subunit protein bL35m, found in Saccharomyces cerevisiae (strain YJM789) (Baker's yeast).